The following is a 444-amino-acid chain: UDP-N-acetylmuramate--L-alanine ligase (444 aa).

111–117 contacts ATP; sequence GAHGKTS.

Belongs to the MurCDEF family.

Its subcellular location is the cytoplasm. The catalysed reaction is UDP-N-acetyl-alpha-D-muramate + L-alanine + ATP = UDP-N-acetyl-alpha-D-muramoyl-L-alanine + ADP + phosphate + H(+). It participates in cell wall biogenesis; peptidoglycan biosynthesis. Functionally, cell wall formation. This chain is UDP-N-acetylmuramate--L-alanine ligase, found in Leuconostoc citreum (strain KM20).